Reading from the N-terminus, the 548-residue chain is Membrane protein insertase YidC (548 aa).

Residues asparagine 6–aspartate 26 form a helical membrane-spanning segment. Residues glutamine 30–proline 53 form a disordered region. Transmembrane regions (helical) follow at residues lysine 345–valine 365, leucine 420–leucine 440, leucine 458–isoleucine 478, and proline 499–valine 519.

The protein belongs to the OXA1/ALB3/YidC family. Type 1 subfamily. Interacts with the Sec translocase complex via SecD. Specifically interacts with transmembrane segments of nascent integral membrane proteins during membrane integration.

It is found in the cell inner membrane. Functionally, required for the insertion and/or proper folding and/or complex formation of integral membrane proteins into the membrane. Involved in integration of membrane proteins that insert both dependently and independently of the Sec translocase complex, as well as at least some lipoproteins. Aids folding of multispanning membrane proteins. The sequence is that of Membrane protein insertase YidC from Erwinia tasmaniensis (strain DSM 17950 / CFBP 7177 / CIP 109463 / NCPPB 4357 / Et1/99).